The sequence spans 153 residues: Ribosomal RNA large subunit methyltransferase H (153 aa).

S-adenosyl-L-methionine-binding positions include leucine 71, glycine 102, and 121–126 (LSRMTL).

This sequence belongs to the RNA methyltransferase RlmH family. In terms of assembly, homodimer.

It is found in the cytoplasm. The catalysed reaction is pseudouridine(1915) in 23S rRNA + S-adenosyl-L-methionine = N(3)-methylpseudouridine(1915) in 23S rRNA + S-adenosyl-L-homocysteine + H(+). Its function is as follows. Specifically methylates the pseudouridine at position 1915 (m3Psi1915) in 23S rRNA. The sequence is that of Ribosomal RNA large subunit methyltransferase H from Anaeromyxobacter sp. (strain Fw109-5).